The following is a 215-amino-acid chain: Sodium channel regulatory subunit beta-2 (215 aa).

The N-terminal stretch at 1–29 (MHRDAWLPRPAFSLTGLSLFFSLVPSGRS) is a signal peptide. The Extracellular segment spans residues 30–157 (MEVTVPTTLS…LEVPPERDST (128 aa)). The Ig-like C2-type domain occupies 32–154 (VTVPTTLSVL…QVLLEVPPER (123 aa)). Residues Asn42, Asn66, and Asn74 are each glycosylated (N-linked (GlcNAc...) asparagine). Cystine bridges form between Cys50–Cys127 and Cys72–Cys75. A helical transmembrane segment spans residues 158-179 (VAVIVGASVGGFLAVVILVLMV). At 180–215 (VKCVRRKKEQKLSTDDLKTEEEGKTDGEGNAEDGAK) the chain is on the cytoplasmic side. The tract at residues 187-215 (KEQKLSTDDLKTEEEGKTDGEGNAEDGAK) is disordered. Basic and acidic residues predominate over residues 189–215 (QKLSTDDLKTEEEGKTDGEGNAEDGAK). Ser192 carries the post-translational modification Phosphoserine. Residue Thr204 is modified to Phosphothreonine.

It belongs to the sodium channel auxiliary subunit SCN2B (TC 8.A.17) family. A voltage-gated sodium (Nav) channel consists of an ion-conducting pore-forming alpha subunit functional on its own that is regulated by one or more beta subunits. The beta subunit SCN2B is disulfide-linked to the pore-forming alpha subunit. Interacts with SCN1A; regulatory subunit of SCN1A/Nav1.1. Interacts with SCN2A; regulatory subunit of SCN2A/Nav1.2. Interacts with SCN3A; regulatory subunit of SCN3A/Nav1.3. Interacts with SCN5A; regulatory subunit of SCN5A/Nav1.5. Interacts with SCN8A; regulatory subunit of SCN8A/Nav1.6. Interacts with SCN9A; regulatory subunit of SCN9A/Nav1.7. Interacts with SCN10A; regulatory subunit of SCN10A/Nav1.8. Interacts with TNR; may play a crucial role in clustering and regulation of activity of SCN2B-containing Nav channels at nodes of Ranvier.

Its subcellular location is the cell membrane. The protein localises to the cell projection. The protein resides in the axon. Regulatory subunit of multiple voltage-gated sodium (Nav) channels directly mediating the depolarization of excitable membranes. Navs, also called VGSCs (voltage-gated sodium channels) or VDSCs (voltage-dependent sodium channels), operate by switching between closed and open conformations depending on the voltage difference across the membrane. In the open conformation they allow Na(+) ions to selectively pass through the pore, along their electrochemical gradient. The influx of Na+ ions provokes membrane depolarization, initiating the propagation of electrical signals throughout cells and tissues. The accessory beta subunits participate in localization and functional modulation of the Nav channels. Modulates the activity of SCN1A/Nav1.1, SCN2A/Nav1.2, SCN2A/Nav1.3, SCN5A/Nav1.5, SCN8A/Nav1.6, SCN9A/Nav1.7 and SCN10A/Nav1.8. The chain is Sodium channel regulatory subunit beta-2 from Rattus norvegicus (Rat).